Reading from the N-terminus, the 1016-residue chain is FHIP family protein Bm1_18400 (1016 aa).

Disordered regions lie at residues 586–608 and 757–778; these read DSLRQHTPPPELGEQESSSRSSF and SDGFKSDTNNDNDDEDPAPLGK.

Belongs to the FHIP family.

The polypeptide is FHIP family protein Bm1_18400 (Brugia malayi (Filarial nematode worm)).